The primary structure comprises 207 residues: dTTP/UTP pyrophosphatase (207 aa).

Catalysis depends on Asp79, which acts as the Proton acceptor.

Belongs to the Maf family. YhdE subfamily. A divalent metal cation serves as cofactor.

Its subcellular location is the cytoplasm. The enzyme catalyses dTTP + H2O = dTMP + diphosphate + H(+). It catalyses the reaction UTP + H2O = UMP + diphosphate + H(+). Functionally, nucleoside triphosphate pyrophosphatase that hydrolyzes dTTP and UTP. May have a dual role in cell division arrest and in preventing the incorporation of modified nucleotides into cellular nucleic acids. The polypeptide is dTTP/UTP pyrophosphatase (Nitrobacter winogradskyi (strain ATCC 25391 / DSM 10237 / CIP 104748 / NCIMB 11846 / Nb-255)).